The sequence spans 448 residues: tRNA(Ile)-lysidine synthase (448 aa).

27-32 (SGGVDS) is an ATP binding site.

Belongs to the tRNA(Ile)-lysidine synthase family.

It is found in the cytoplasm. The catalysed reaction is cytidine(34) in tRNA(Ile2) + L-lysine + ATP = lysidine(34) in tRNA(Ile2) + AMP + diphosphate + H(+). Its function is as follows. Ligates lysine onto the cytidine present at position 34 of the AUA codon-specific tRNA(Ile) that contains the anticodon CAU, in an ATP-dependent manner. Cytidine is converted to lysidine, thus changing the amino acid specificity of the tRNA from methionine to isoleucine. The protein is tRNA(Ile)-lysidine synthase of Vibrio campbellii (strain ATCC BAA-1116).